The sequence spans 106 residues: Small ribosomal subunit protein bS16 (106 aa).

The protein belongs to the bacterial ribosomal protein bS16 family.

This chain is Small ribosomal subunit protein bS16, found in Wolbachia sp. subsp. Brugia malayi (strain TRS).